Consider the following 219-residue polypeptide: Large ribosomal subunit protein uL16y (219 aa).

Belongs to the universal ribosomal protein uL16 family. As to quaternary structure, component of the small ribosomal subunit. Mature ribosomes consist of a small (40S) and a large (60S) subunit. The 40S subunit contains about 33 different proteins and 1 molecule of RNA (18S). The 60S subunit contains about 49 different proteins and 3 molecules of RNA (25S, 5.8S and 5S).

This Oryza sativa subsp. japonica (Rice) protein is Large ribosomal subunit protein uL16y (SG12).